The primary structure comprises 327 residues: Clavesin-2 (327 aa).

In terms of domain architecture, CRAL-TRIO spans 96-257; sequence IKQALKDGFP…EFGGMLPPYD (162 aa). The interval 288–327 is disordered; that stretch reads VDKELSPKSMKRSQSVVDPTALKRMDKSEEENMQPLLSLD. Ser-325 is modified (phosphoserine).

In terms of assembly, forms a complex with clathrin heavy chain and gamma-adaptin. Expressed in brain with no expression detected in non-neuronal tissues (at protein level).

The protein localises to the golgi apparatus. It is found in the trans-Golgi network membrane. The protein resides in the early endosome membrane. It localises to the cytoplasmic vesicle. Its subcellular location is the clathrin-coated vesicle. Its function is as follows. Required for normal morphology of late endosomes and/or lysosomes in neurons. Binds phosphatidylinositol 3,5-bisphosphate (PtdIns(3,5)P2). This chain is Clavesin-2, found in Rattus norvegicus (Rat).